The following is a 430-amino-acid chain: Adenylosuccinate synthetase (430 aa).

GTP is bound by residues 13–19 and 41–43; these read GDEGKGK and GHT. Aspartate 14 serves as the catalytic Proton acceptor. Residues aspartate 14 and glycine 41 each coordinate Mg(2+). IMP-binding positions include 14-17, 39-42, threonine 130, arginine 144, glutamine 225, threonine 240, and arginine 304; these read DEGK and NAGH. Histidine 42 functions as the Proton donor in the catalytic mechanism. Residue 300 to 306 participates in substrate binding; that stretch reads ASTGRPR. GTP contacts are provided by residues arginine 306, 332 to 334, and 414 to 416; these read KLD and STG.

The protein belongs to the adenylosuccinate synthetase family. Homodimer. Mg(2+) is required as a cofactor.

It is found in the cytoplasm. The catalysed reaction is IMP + L-aspartate + GTP = N(6)-(1,2-dicarboxyethyl)-AMP + GDP + phosphate + 2 H(+). It functions in the pathway purine metabolism; AMP biosynthesis via de novo pathway; AMP from IMP: step 1/2. Plays an important role in the de novo pathway of purine nucleotide biosynthesis. Catalyzes the first committed step in the biosynthesis of AMP from IMP. This Xylella fastidiosa (strain 9a5c) protein is Adenylosuccinate synthetase.